A 375-amino-acid chain; its full sequence is Chaperone protein DnaJ (375 aa).

The J domain maps to 5–70 (DYYEVLEISR…QKRQAYDRFG (66 aa)). Residues 133–211 (GKEVTIQIPS…CHGHGRVRRN (79 aa)) form a CR-type zinc finger. Residues Cys-146, Cys-149, Cys-163, Cys-166, Cys-185, Cys-188, Cys-199, and Cys-202 each contribute to the Zn(2+) site. 4 CXXCXGXG motif repeats span residues 146–153 (CEVCRGSG), 163–170 (CATCGGRG), 185–192 (CPQCNGSG), and 199–206 (CTNCHGHG).

This sequence belongs to the DnaJ family. Homodimer. Zn(2+) serves as cofactor.

The protein resides in the cytoplasm. Participates actively in the response to hyperosmotic and heat shock by preventing the aggregation of stress-denatured proteins and by disaggregating proteins, also in an autonomous, DnaK-independent fashion. Unfolded proteins bind initially to DnaJ; upon interaction with the DnaJ-bound protein, DnaK hydrolyzes its bound ATP, resulting in the formation of a stable complex. GrpE releases ADP from DnaK; ATP binding to DnaK triggers the release of the substrate protein, thus completing the reaction cycle. Several rounds of ATP-dependent interactions between DnaJ, DnaK and GrpE are required for fully efficient folding. Also involved, together with DnaK and GrpE, in the DNA replication of plasmids through activation of initiation proteins. This chain is Chaperone protein DnaJ, found in Acidithiobacillus ferrooxidans (strain ATCC 23270 / DSM 14882 / CIP 104768 / NCIMB 8455) (Ferrobacillus ferrooxidans (strain ATCC 23270)).